The chain runs to 415 residues: uncharacterized protein (415 aa).

Residues Cys85, Cys91, Cys94, and Cys175 each contribute to the [4Fe-4S] cluster site. Residues Gln248, Tyr276, Glu297, and Asn344 each contribute to the S-adenosyl-L-methionine site. Cys371 acts as the Nucleophile in catalysis.

The protein belongs to the class I-like SAM-binding methyltransferase superfamily. RNA M5U methyltransferase family.

This is an uncharacterized protein from Leptospira interrogans serogroup Icterohaemorrhagiae serovar Lai (strain 56601).